A 102-amino-acid chain; its full sequence is Crustacean hyperglycemic hormones 3 (102 aa).

The N-terminal stretch at M1–A22 is a signal peptide. 3 cysteine pairs are disulfide-bonded: C35–C71, C51–C67, and C54–C80. At V100 the chain carries Valine amide.

This sequence belongs to the arthropod CHH/MIH/GIH/VIH hormone family.

It localises to the secreted. In terms of biological role, hormone found in the sinus gland of isopods and decapods which controls the blood sugar level. Has a secretagogue action over the amylase released from the midgut gland. May act as a stress hormone and may be involved in the control of molting and reproduction. The protein is Crustacean hyperglycemic hormones 3 (CHH3) of Penaeus monodon (Giant tiger prawn).